Consider the following 213-residue polypeptide: Pyrrolidone-carboxylate peptidase (213 aa).

Active-site residues include Glu78, Cys141, and His165.

This sequence belongs to the peptidase C15 family. In terms of assembly, homotetramer.

Its subcellular location is the cytoplasm. The enzyme catalyses Release of an N-terminal pyroglutamyl group from a polypeptide, the second amino acid generally not being Pro.. Removes 5-oxoproline from various penultimate amino acid residues except L-proline. In Staphylococcus carnosus (strain TM300), this protein is Pyrrolidone-carboxylate peptidase.